Consider the following 132-residue polypeptide: Small ribosomal subunit protein uS8 (132 aa).

Belongs to the universal ribosomal protein uS8 family. As to quaternary structure, part of the 30S ribosomal subunit. Contacts proteins S5 and S12.

Its function is as follows. One of the primary rRNA binding proteins, it binds directly to 16S rRNA central domain where it helps coordinate assembly of the platform of the 30S subunit. In Rhodopseudomonas palustris (strain HaA2), this protein is Small ribosomal subunit protein uS8.